The chain runs to 239 residues: Ribonuclease PH (239 aa).

Phosphate-binding positions include Arg-86 and 124-126; that span reads GTR.

This sequence belongs to the RNase PH family. In terms of assembly, homohexameric ring arranged as a trimer of dimers.

The catalysed reaction is tRNA(n+1) + phosphate = tRNA(n) + a ribonucleoside 5'-diphosphate. Functionally, phosphorolytic 3'-5' exoribonuclease that plays an important role in tRNA 3'-end maturation. Removes nucleotide residues following the 3'-CCA terminus of tRNAs; can also add nucleotides to the ends of RNA molecules by using nucleoside diphosphates as substrates, but this may not be physiologically important. Probably plays a role in initiation of 16S rRNA degradation (leading to ribosome degradation) during starvation. This Rhizobium etli (strain CIAT 652) protein is Ribonuclease PH.